We begin with the raw amino-acid sequence, 143 residues long: Large ribosomal subunit protein uL11 (143 aa).

It belongs to the universal ribosomal protein uL11 family. Part of the ribosomal stalk of the 50S ribosomal subunit. Interacts with L10 and the large rRNA to form the base of the stalk. L10 forms an elongated spine to which L12 dimers bind in a sequential fashion forming a multimeric L10(L12)X complex. One or more lysine residues are methylated.

In terms of biological role, forms part of the ribosomal stalk which helps the ribosome interact with GTP-bound translation factors. The chain is Large ribosomal subunit protein uL11 from Pseudomonas savastanoi pv. phaseolicola (strain 1448A / Race 6) (Pseudomonas syringae pv. phaseolicola (strain 1448A / Race 6)).